The chain runs to 330 residues: Phosphate acyltransferase (330 aa).

This sequence belongs to the PlsX family. Homodimer. Probably interacts with PlsY.

The protein localises to the cytoplasm. The enzyme catalyses a fatty acyl-[ACP] + phosphate = an acyl phosphate + holo-[ACP]. It functions in the pathway lipid metabolism; phospholipid metabolism. Its function is as follows. Catalyzes the reversible formation of acyl-phosphate (acyl-PO(4)) from acyl-[acyl-carrier-protein] (acyl-ACP). This enzyme utilizes acyl-ACP as fatty acyl donor, but not acyl-CoA. This Campylobacter hominis (strain ATCC BAA-381 / DSM 21671 / CCUG 45161 / LMG 19568 / NCTC 13146 / CH001A) protein is Phosphate acyltransferase.